A 1402-amino-acid polypeptide reads, in one-letter code: MTTKRSLFVRLVPCRCLRGEEETVTTLDYSHCSLEQVPKEIFTFEKTLEELYLDANQIEELPKQLFNCQSLHKLSLPDNDLTTLPASIANLINLRELDVSKNGIQEFPENIKNCKVLTIVEASVNPISKLPDGFSQLLNLTQLYLNDAFLEFLPANFGRLTKLQILELRENQLKMLPKTMNRLTQLERLDLGSNEFTEVPEVLEQLSGLREFWMDGNRLTFIPGFIGSLRQLTYLDVSKNNIEMVEEGISTCENLQDFLLSSNSLQQLPETIGSLKNVTTLKIDENQLMYLPDSIGGLRSIEELDCSFNEIEALPSSIGQLTNMRTFAADHNYLQQLPPEIGNWKNITVLFLHCNKLETLPEEMGDMQKLKVINLSDNRLKNLPFSFTKLQQLTAMWLSDNQSKPLIPLQKETDTETQKMVLTNYMFPQQPRTEDVMFISDNESFNPALWEEQRKQRAQVAFECDEDKDEREAPPREGNLKRYPTPYPDELKNMVKTVQTIVHRLKDEETNEESGRDLKQHEDQQVVNKDKCVKTSESTTTKSKLDEREKYMNSVQKMSEPEAETNGGNLPVTASMKLSGNLKHIVNHDDVFEESEELSSDEEMKMAEMRPPLIESSINQPKVVALSNNKKDDAKDADSLSDEVTHNSNQNNSNCSSPSRMSDSVSLNTDSSQDTSLCSPVKQTPVDSNSKVRQEDENFNSLLQNGVNLNNSPEEKFKINDKKDFKLPEYDLNIEEQLVLIEKDIDSKATSDDSRQLDHINMNINKLVTNNIFQPEVMERSKMQDIVLGTGFLSIHPKNEAEHIENGAKFPNLESINKVNGLCEDTAPSPGRVEPQKASSSADVGISKSTEDLSPQRSGPTGAVVKSHSITNMETGGLKIYDILGDDGPQPPSAAVKIASAVDGKNIVRSKSATLLYDQPLQVFTAASSSSELLSGTKAVFKFDSNHNPEEPDIIRAATVSGPQSTPHLYGPPQYNVQYSGSATVKDTLWHPKQNPQIDPVSFPPQRLPRSESAENHSYAKHSANMNFSNHNNVRANTGYHLQQRLAPARHGEMWAISPNDRLVPAVTRTTIQRQSSVSSTASVNLGDPTRRTEGDYLSYRELHSMGRTPVMSGSQRPLSARAYSIDGPNTSRPQSARPSINEIPERTMSVSDFNYSRTSPSKRPNTRVGSEHSLLDPPGKSKVPHDWREQVLRHIEAKKLEKHPQTSSPGECCQDDRFMSEEQNHPSGALSHRGLPDSLMKMPLSNGQMGQPLRPQAHYSQTHHPPQASVARHPSREQLIDYLMLKVAHQPPYTHPHCSPRQGHELAKQEIRVRVEKDPELGFSISGGVGGRGNPFRPDDDGIFVTRVQPEGPASKLLQPGDKIIQANGYSFINIEHGQAVSLLKTFHNAVDLIIVREVSS.

17 LRR repeats span residues 23–44 (TVTT…IFTF), 47–68 (TLEE…LFNC), 70–91 (SLHK…IANL), 93–114 (NLRE…IKNC), 116–137 (VLTI…FSQL), 139–161 (NLTQ…GRLT), 162–183 (KLQI…MNRL), 185–206 (QLER…LEQL), 208–229 (GLRE…IGSL), 231–252 (QLTY…ISTC), 254–275 (NLQD…IGSL), 277–298 (NVTT…IGGL), 300–321 (SIEE…IGQL), 323–344 (NMRT…IGNW), 346–367 (NITV…MGDM), 369–391 (KLKV…TKLQ), and 392–413 (QLTA…QKET). Ser-440 and Ser-444 each carry phosphoserine. 2 disordered regions span residues 465–489 (DEDK…PYPD) and 507–543 (DEET…TTKS). Residues 470 to 480 (EREAPPREGNL) are compositionally biased toward basic and acidic residues. Tyr-483 is modified (phosphotyrosine). Thr-485 carries the phosphothreonine modification. The span at 507 to 534 (DEETNEESGRDLKQHEDQQVVNKDKCVK) shows a compositional bias: basic and acidic residues. 4 positions are modified to phosphoserine: Ser-595, Ser-599, Ser-600, and Ser-617. Residues 629 to 638 (NKKDDAKDAD) show a composition bias toward basic and acidic residues. The interval 629-694 (NKKDDAKDAD…PVDSNSKVRQ (66 aa)) is disordered. The segment covering 647–659 (NSNQNNSNCSSPS) has biased composition (low complexity). The segment covering 660-689 (RMSDSVSLNTDSSQDTSLCSPVKQTPVDSN) has biased composition (polar residues). 4 positions are modified to phosphoserine: Ser-712, Ser-849, Ser-854, and Ser-869. The disordered stretch occupies residues 824-864 (EDTAPSPGRVEPQKASSSADVGISKSTEDLSPQRSGPTGAV). Thr-914 is modified (phosphothreonine). Residue Tyr-917 is modified to Phosphotyrosine. Ser-928 carries the post-translational modification Phosphoserine. Tyr-970 carries the phosphotyrosine modification. 2 disordered regions span residues 990 to 1018 (WHPK…ENHS) and 1070 to 1093 (TTIQ…TRRT). The span at 1070 to 1084 (TTIQRQSSVSSTASV) shows a compositional bias: polar residues. Tyr-1097 is subject to Phosphotyrosine. Disordered regions lie at residues 1107 to 1187 (GRTP…VPHD), 1198 to 1217 (AKKL…CQDD), and 1222 to 1274 (EEQN…VARH). Polar residues-rich tracts occupy residues 1128–1139 (GPNTSRPQSARP) and 1149–1164 (MSVS…PSKR). Phosphoserine is present on residues Ser-1150 and Ser-1171. Residues Leu-1231, Arg-1234, and Ser-1276 each carry the phosphoserine modification. Residues 1311-1400 (EIRVRVEKDP…AVDLIIVREV (90 aa)) form the PDZ domain.

This sequence belongs to the LAP (LRR and PDZ) protein family. In terms of assembly, interacts with ERBB2, BPAG1 and ITGB4. May favor the localization of ERBB2, by restricting its presence to the basolateral membrane of epithelial cells. Also found to interact with ARVCF and delta catenin. Interacts (via C-terminus) with DST (via N-terminus). Interacts with NOD2 (via CARD domain). Isoform 2 is phosphorylated on Ser-1231 and Ser-1234.

It localises to the cell junction. Its subcellular location is the hemidesmosome. It is found in the nucleus membrane. The protein localises to the basolateral cell membrane. Functionally, acts as an adapter for the receptor ERBB2, in epithelia. By binding the unphosphorylated ERBB2 'Tyr-1248' receptor, it may contribute to stabilize this unphosphorylated state. Inhibits NOD2-dependent NF-kappa-B signaling and pro-inflammatory cytokine secretion. The protein is Erbin of Mus musculus (Mouse).